The primary structure comprises 83 residues: Neurotoxin LmNaTx3 (83 aa).

The first 21 residues, 1–21 (MQLKIQLLMLVLMIVLTDVYS), serve as a signal peptide directing secretion. The 62-residue stretch at 22-83 (KDGFIVSKKN…NIAMKNKNYC (62 aa)) folds into the LCN-type CS-alpha/beta domain. Cystine bridges form between cysteine 32-cysteine 83, cysteine 36-cysteine 59, cysteine 45-cysteine 64, and cysteine 49-cysteine 66.

Belongs to the long (4 C-C) scorpion toxin superfamily. Sodium channel inhibitor family. Alpha subfamily. In terms of tissue distribution, expressed by the venom gland.

Its subcellular location is the secreted. Functionally, binds voltage-independently at site-3 of voltage-gated sodium channels (Nav) and inhibits the inactivation of the activated channels, thereby blocking neuronal transmission. This chain is Neurotoxin LmNaTx3, found in Lychas mucronatus (Chinese swimming scorpion).